The following is a 460-amino-acid chain: Bifunctional protein GlmU (460 aa).

The interval 1–229 (MTNYAIILAA…FNESLGVNDR (229 aa)) is pyrophosphorylase. Residues 8-11 (LAAG), lysine 22, glutamine 72, and 77-78 (GT) contribute to the UDP-N-acetyl-alpha-D-glucosamine site. Aspartate 102 lines the Mg(2+) pocket. Positions 139, 154, 169, and 227 each coordinate UDP-N-acetyl-alpha-D-glucosamine. A Mg(2+)-binding site is contributed by asparagine 227. The tract at residues 230–250 (VALATAETVMRQRITQKHMVN) is linker. Positions 251 to 460 (GVTFHNPETV…RLAHHPSRSK (210 aa)) are N-acetyltransferase. Residues arginine 332 and lysine 350 each contribute to the UDP-N-acetyl-alpha-D-glucosamine site. The active-site Proton acceptor is the histidine 362. Positions 365 and 376 each coordinate UDP-N-acetyl-alpha-D-glucosamine. Residues alanine 379, 385–386 (NY), serine 404, alanine 422, and arginine 439 contribute to the acetyl-CoA site.

In the N-terminal section; belongs to the N-acetylglucosamine-1-phosphate uridyltransferase family. The protein in the C-terminal section; belongs to the transferase hexapeptide repeat family. Homotrimer. The cofactor is Mg(2+).

It localises to the cytoplasm. It carries out the reaction alpha-D-glucosamine 1-phosphate + acetyl-CoA = N-acetyl-alpha-D-glucosamine 1-phosphate + CoA + H(+). The enzyme catalyses N-acetyl-alpha-D-glucosamine 1-phosphate + UTP + H(+) = UDP-N-acetyl-alpha-D-glucosamine + diphosphate. It functions in the pathway nucleotide-sugar biosynthesis; UDP-N-acetyl-alpha-D-glucosamine biosynthesis; N-acetyl-alpha-D-glucosamine 1-phosphate from alpha-D-glucosamine 6-phosphate (route II): step 2/2. Its pathway is nucleotide-sugar biosynthesis; UDP-N-acetyl-alpha-D-glucosamine biosynthesis; UDP-N-acetyl-alpha-D-glucosamine from N-acetyl-alpha-D-glucosamine 1-phosphate: step 1/1. It participates in bacterial outer membrane biogenesis; LPS lipid A biosynthesis. Its function is as follows. Catalyzes the last two sequential reactions in the de novo biosynthetic pathway for UDP-N-acetylglucosamine (UDP-GlcNAc). The C-terminal domain catalyzes the transfer of acetyl group from acetyl coenzyme A to glucosamine-1-phosphate (GlcN-1-P) to produce N-acetylglucosamine-1-phosphate (GlcNAc-1-P), which is converted into UDP-GlcNAc by the transfer of uridine 5-monophosphate (from uridine 5-triphosphate), a reaction catalyzed by the N-terminal domain. This chain is Bifunctional protein GlmU, found in Streptococcus pyogenes serotype M49 (strain NZ131).